The sequence spans 134 residues: Global transcriptional regulator Spx (134 aa).

Cys10 and Cys13 are joined by a disulfide.

It belongs to the ArsC family. Spx subfamily. As to quaternary structure, interacts with the C-terminal domain of the alpha subunit of the RNAP.

The protein localises to the cytoplasm. Global transcriptional regulator that plays a key role in stress response and exerts either positive or negative regulation of genes. Acts by interacting with the C-terminal domain of the alpha subunit of the RNA polymerase (RNAP). This interaction can enhance binding of RNAP to the promoter region of target genes and stimulate their transcription, or block interaction of RNAP with activator. This Streptococcus pyogenes serotype M6 (strain ATCC BAA-946 / MGAS10394) protein is Global transcriptional regulator Spx.